We begin with the raw amino-acid sequence, 231 residues long: Ribosomal RNA small subunit methyltransferase G (231 aa).

S-adenosyl-L-methionine is bound by residues Gly-75, Gly-125–Glu-126, and Arg-140. Over residues Ala-204–Glu-213 the composition is skewed to acidic residues. Residues Ala-204–Gly-231 form a disordered region.

The protein belongs to the methyltransferase superfamily. RNA methyltransferase RsmG family.

Its subcellular location is the cytoplasm. Functionally, specifically methylates the N7 position of a guanine in 16S rRNA. The protein is Ribosomal RNA small subunit methyltransferase G of Rhodopirellula baltica (strain DSM 10527 / NCIMB 13988 / SH1).